Reading from the N-terminus, the 327-residue chain is Aspartate carbamoyltransferase catalytic subunit (327 aa).

Arg54 and Thr55 together coordinate carbamoyl phosphate. Residue Lys82 participates in L-aspartate binding. Carbamoyl phosphate contacts are provided by Arg104, His134, and Gln137. Residues Arg177 and Arg232 each contribute to the L-aspartate site. Carbamoyl phosphate is bound by residues Gly280 and Pro281.

It belongs to the aspartate/ornithine carbamoyltransferase superfamily. ATCase family. In terms of assembly, heterododecamer (2C3:3R2) of six catalytic PyrB chains organized as two trimers (C3), and six regulatory PyrI chains organized as three dimers (R2).

The enzyme catalyses carbamoyl phosphate + L-aspartate = N-carbamoyl-L-aspartate + phosphate + H(+). It participates in pyrimidine metabolism; UMP biosynthesis via de novo pathway; (S)-dihydroorotate from bicarbonate: step 2/3. Its function is as follows. Catalyzes the condensation of carbamoyl phosphate and aspartate to form carbamoyl aspartate and inorganic phosphate, the committed step in the de novo pyrimidine nucleotide biosynthesis pathway. This Micrococcus luteus (strain ATCC 4698 / DSM 20030 / JCM 1464 / CCM 169 / CCUG 5858 / IAM 1056 / NBRC 3333 / NCIMB 9278 / NCTC 2665 / VKM Ac-2230) (Micrococcus lysodeikticus) protein is Aspartate carbamoyltransferase catalytic subunit.